A 371-amino-acid chain; its full sequence is 4-hydroxy-3-methylbut-2-en-1-yl diphosphate synthase (flavodoxin) (371 aa).

C269, C272, C304, and E311 together coordinate [4Fe-4S] cluster.

The protein belongs to the IspG family. It depends on [4Fe-4S] cluster as a cofactor.

The enzyme catalyses (2E)-4-hydroxy-3-methylbut-2-enyl diphosphate + oxidized [flavodoxin] + H2O + 2 H(+) = 2-C-methyl-D-erythritol 2,4-cyclic diphosphate + reduced [flavodoxin]. It participates in isoprenoid biosynthesis; isopentenyl diphosphate biosynthesis via DXP pathway; isopentenyl diphosphate from 1-deoxy-D-xylulose 5-phosphate: step 5/6. Functionally, converts 2C-methyl-D-erythritol 2,4-cyclodiphosphate (ME-2,4cPP) into 1-hydroxy-2-methyl-2-(E)-butenyl 4-diphosphate. The polypeptide is 4-hydroxy-3-methylbut-2-en-1-yl diphosphate synthase (flavodoxin) (Acinetobacter baylyi (strain ATCC 33305 / BD413 / ADP1)).